Consider the following 244-residue polypeptide: Probable transcriptional regulatory protein Dgeo_2194 (244 aa).

The interval 1-21 (MAGHSKWAQIKRKKGANDKKR) is disordered.

This sequence belongs to the TACO1 family.

The protein localises to the cytoplasm. The polypeptide is Probable transcriptional regulatory protein Dgeo_2194 (Deinococcus geothermalis (strain DSM 11300 / CIP 105573 / AG-3a)).